Reading from the N-terminus, the 726-residue chain is Dipeptidyl-peptidase 5 (726 aa).

A signal peptide spans M1 to A19. 2 N-linked (GlcNAc...) asparagine glycosylation sites follow: N96 and N252. Positions V268–V292 are disordered. N485 carries N-linked (GlcNAc...) asparagine glycosylation. Catalysis depends on S558, which acts as the Charge relay system. N605 carries N-linked (GlcNAc...) asparagine glycosylation. Residues D641 and H673 each act as charge relay system in the active site. N-linked (GlcNAc...) asparagine glycosylation occurs at N699.

It belongs to the peptidase S9C family.

It localises to the secreted. Functionally, extracellular dipeptidyl-peptidase which removes N-terminal dipeptides sequentially from polypeptides having unsubstituted N-termini. Contributes to pathogenicity. This Arthroderma otae (Microsporum canis) protein is Dipeptidyl-peptidase 5 (DPP5).